Consider the following 387-residue polypeptide: Exodeoxyribonuclease 7 large subunit (387 aa).

The protein belongs to the XseA family. As to quaternary structure, heterooligomer composed of large and small subunits.

The protein resides in the cytoplasm. The catalysed reaction is Exonucleolytic cleavage in either 5'- to 3'- or 3'- to 5'-direction to yield nucleoside 5'-phosphates.. Its function is as follows. Bidirectionally degrades single-stranded DNA into large acid-insoluble oligonucleotides, which are then degraded further into small acid-soluble oligonucleotides. This Campylobacter jejuni subsp. jejuni serotype O:6 (strain 81116 / NCTC 11828) protein is Exodeoxyribonuclease 7 large subunit.